A 450-amino-acid polypeptide reads, in one-letter code: Zinc metalloproteinase nas-13 (450 aa).

Residues 1 to 31 (MPSPTSSSASVFSSHLFFVFCIFSQIAQSYA) form the signal peptide. Asn-68 is a glycosylation site (N-linked (GlcNAc...) asparagine). The Peptidase M12A domain occupies 110–303 (NAVRQTYLKW…YKINMLYNCP (194 aa)). 2 disulfides stabilise this stretch: Cys-152–Cys-302 and Cys-174–Cys-193. His-201 lines the Zn(2+) pocket. The active site involves Glu-202. Residues His-205 and His-211 each contribute to the Zn(2+) site. Residue Asn-225 is glycosylated (N-linked (GlcNAc...) asparagine). Residues 349–351 (RGD) carry the Cell attachment site motif. 6 cysteine pairs are disulfide-bonded: Cys-368/Cys-404, Cys-375/Cys-397, Cys-384/Cys-401, Cys-414/Cys-450, Cys-421/Cys-443, and Cys-430/Cys-447. ShKT domains lie at 368-404 (CEDRRKDCEFLARAGHCESRFSIRFMTENCANSCGKC) and 414-450 (CEDARTWCERWANSGMCNQTVFKDYMRQKCAKSCNFC). Asn-431 carries an N-linked (GlcNAc...) asparagine glycan.

The cofactor is Zn(2+).

It is found in the secreted. In terms of biological role, metalloprotease. This chain is Zinc metalloproteinase nas-13 (nas-13), found in Caenorhabditis elegans.